The sequence spans 143 residues: 3-dehydroquinate dehydratase (143 aa).

Catalysis depends on tyrosine 22, which acts as the Proton acceptor. Asparagine 73, histidine 79, and aspartate 86 together coordinate substrate. Histidine 99 (proton donor) is an active-site residue. Residues isoleucine 100–serine 101 and arginine 110 contribute to the substrate site.

Belongs to the type-II 3-dehydroquinase family. In terms of assembly, homododecamer.

The enzyme catalyses 3-dehydroquinate = 3-dehydroshikimate + H2O. It participates in metabolic intermediate biosynthesis; chorismate biosynthesis; chorismate from D-erythrose 4-phosphate and phosphoenolpyruvate: step 3/7. In terms of biological role, catalyzes a trans-dehydration via an enolate intermediate. This is 3-dehydroquinate dehydratase from Salinispora arenicola (strain CNS-205).